We begin with the raw amino-acid sequence, 319 residues long: Annexin A4 (319 aa).

N-acetylalanine is present on A2. T7 carries the phosphothreonine modification. Position 12 is a phosphoserine (S12). 4 Annexin repeats span residues 14–85 (FSAT…GMIT), 86–157 (PTVL…SLSA), 169–241 (ALMR…AIVK), and 245–316 (NKSA…ILCG). K213, K293, and K300 each carry N6-acetyllysine.

Belongs to the annexin family. In terms of tissue distribution, expressed in pancreas (at protein level). Also detected in liver, spleen, intestine, stomach, kidney, and adrenal glands.

The protein resides in the zymogen granule membrane. In terms of biological role, calcium/phospholipid-binding protein which promotes membrane fusion and is involved in exocytosis. The protein is Annexin A4 (ANXA4) of Canis lupus familiaris (Dog).